Consider the following 465-residue polypeptide: Ribulose bisphosphate carboxylase large chain (465 aa).

The residue at position 4 (K4) is an N6,N6,N6-trimethyllysine. Substrate is bound by residues N113 and T163. The active-site Proton acceptor is K165. K167 is a substrate binding site. K191, D193, and E194 together coordinate Mg(2+). K191 is modified (N6-carboxylysine). The active-site Proton acceptor is the H284. Positions 285, 317, and 369 each coordinate substrate.

The protein belongs to the RuBisCO large chain family. Type I subfamily. In terms of assembly, heterohexadecamer of 8 large chains and 8 small chains; disulfide-linked. The disulfide link is formed within the large subunit homodimers. Requires Mg(2+) as cofactor. Post-translationally, the disulfide bond which can form in the large chain dimeric partners within the hexadecamer appears to be associated with oxidative stress and protein turnover.

The protein localises to the plastid. It localises to the chloroplast. It catalyses the reaction 2 (2R)-3-phosphoglycerate + 2 H(+) = D-ribulose 1,5-bisphosphate + CO2 + H2O. It carries out the reaction D-ribulose 1,5-bisphosphate + O2 = 2-phosphoglycolate + (2R)-3-phosphoglycerate + 2 H(+). RuBisCO catalyzes two reactions: the carboxylation of D-ribulose 1,5-bisphosphate, the primary event in carbon dioxide fixation, as well as the oxidative fragmentation of the pentose substrate in the photorespiration process. Both reactions occur simultaneously and in competition at the same active site. The polypeptide is Ribulose bisphosphate carboxylase large chain (Cornus florida (Flowering dogwood)).